Here is a 243-residue protein sequence, read N- to C-terminus: Ribonuclease PH (243 aa).

Phosphate contacts are provided by residues Arg-91 and 129-131 (GTR).

It belongs to the RNase PH family. In terms of assembly, homohexameric ring arranged as a trimer of dimers.

The catalysed reaction is tRNA(n+1) + phosphate = tRNA(n) + a ribonucleoside 5'-diphosphate. Its function is as follows. Phosphorolytic 3'-5' exoribonuclease that plays an important role in tRNA 3'-end maturation. Removes nucleotide residues following the 3'-CCA terminus of tRNAs; can also add nucleotides to the ends of RNA molecules by using nucleoside diphosphates as substrates, but this may not be physiologically important. Probably plays a role in initiation of 16S rRNA degradation (leading to ribosome degradation) during starvation. The sequence is that of Ribonuclease PH from Burkholderia pseudomallei (strain 668).